We begin with the raw amino-acid sequence, 931 residues long: Neuropilin-2 (931 aa).

A signal peptide spans 1 to 20 (MDMFPLTWVFLALYFSGHEV). Topologically, residues 21–864 (RSQQDPPCGG…EKSWLYTLDP (844 aa)) are extracellular. 3 disulfide bridges follow: Cys-28-Cys-55, Cys-83-Cys-105, and Cys-149-Cys-175. 2 CUB domains span residues 28–142 (CGGR…YEIF) and 149–267 (CSKN…YYLI). Asn-152 and Asn-157 each carry an N-linked (GlcNAc...) asparagine glycan. 3 residues coordinate Ca(2+): Glu-197, Asp-211, and Asp-252. A disulfide bond links Cys-208 and Cys-230. Cystine bridges form between Cys-277/Cys-427 and Cys-434/Cys-592. F5/8 type C domains follow at residues 277–427 (CNVP…LFGC) and 434–592 (CSNM…VLGC). Over residues 298–310 (TFSDGRWTPQQSR) the composition is skewed to polar residues. Positions 298–317 (TFSDGRWTPQQSRLHGDDNG) are disordered. The disordered stretch occupies residues 601–621 (VETLGPTVKSEETTTPYPMDE). Asn-629 carries N-linked (GlcNAc...) asparagine glycosylation. In terms of domain architecture, MAM spans 642–802 (SGFNCNFDFP…TDVPLENCME (161 aa)). A disordered region spans residues 819–854 (THGGEGYEDEIDDEYEGDWSNSSSSTSGAGDPSSGK). The segment covering 824–835 (GYEDEIDDEYEG) has biased composition (acidic residues). The span at 836 to 851 (DWSNSSSSTSGAGDPS) shows a compositional bias: low complexity. Asn-839 is a glycosylation site (N-linked (GlcNAc...) asparagine). The helical transmembrane segment at 865–889 (ILITIIAMSSLGVLLGATCAGLLLY) threads the bilayer. At 890–931 (CTCSYSGLSSRSCTTLENYNFELYDGLKHKVKINHQKCCSEA) the chain is on the cytoplasmic side.

This sequence belongs to the neuropilin family. In terms of assembly, heterodimer with NRP1. Binds PLXNB1. As to expression, expressed in developing CNS, PNS and in some nonneural tissues including limb buds, developing bones, muscles, intestinal epithelium, kidney, lung and submandibular gland.

The protein localises to the membrane. In terms of biological role, high affinity receptor for semaphorins 3C, 3F, VEGF-165 and VEGF-145 isoforms of VEGF, and the PLGF-2 isoform of PGF. This is Neuropilin-2 (Nrp2) from Mus musculus (Mouse).